A 304-amino-acid polypeptide reads, in one-letter code: UDP-3-O-acyl-N-acetylglucosamine deacetylase (304 aa).

3 residues coordinate Zn(2+): His78, His237, and Asp241. The Proton donor role is filled by His264.

This sequence belongs to the LpxC family. The cofactor is Zn(2+).

It catalyses the reaction a UDP-3-O-[(3R)-3-hydroxyacyl]-N-acetyl-alpha-D-glucosamine + H2O = a UDP-3-O-[(3R)-3-hydroxyacyl]-alpha-D-glucosamine + acetate. It participates in glycolipid biosynthesis; lipid IV(A) biosynthesis; lipid IV(A) from (3R)-3-hydroxytetradecanoyl-[acyl-carrier-protein] and UDP-N-acetyl-alpha-D-glucosamine: step 2/6. Functionally, catalyzes the hydrolysis of UDP-3-O-myristoyl-N-acetylglucosamine to form UDP-3-O-myristoylglucosamine and acetate, the committed step in lipid A biosynthesis. This is UDP-3-O-acyl-N-acetylglucosamine deacetylase from Acidithiobacillus ferrooxidans (strain ATCC 53993 / BNL-5-31) (Leptospirillum ferrooxidans (ATCC 53993)).